The primary structure comprises 40 residues: Photosystem II reaction center protein J (40 aa).

Residues 8-28 (IPLWLVGTVTGIPVIGLIGVF) traverse the membrane as a helical segment.

Belongs to the PsbJ family. In terms of assembly, PSII is composed of 1 copy each of membrane proteins PsbA, PsbB, PsbC, PsbD, PsbE, PsbF, PsbH, PsbI, PsbJ, PsbK, PsbL, PsbM, PsbT, PsbX, PsbY, PsbZ, Psb30/Ycf12, at least 3 peripheral proteins of the oxygen-evolving complex and a large number of cofactors. It forms dimeric complexes.

The protein resides in the plastid. It localises to the chloroplast thylakoid membrane. Its function is as follows. One of the components of the core complex of photosystem II (PSII). PSII is a light-driven water:plastoquinone oxidoreductase that uses light energy to abstract electrons from H(2)O, generating O(2) and a proton gradient subsequently used for ATP formation. It consists of a core antenna complex that captures photons, and an electron transfer chain that converts photonic excitation into a charge separation. This chain is Photosystem II reaction center protein J, found in Musa acuminata (Banana).